An 895-amino-acid chain; its full sequence is MIIERIRLRNFLSHSDSDIYFDTGINMIIGQNGAGKSSIVDAIRFALFSDKRTRRTEDMIKKGERYMEVELYFRSEGHSYRIRRTIERRGKSISTDAEIERDGSIITRGASDVSNYVEKNVLNINKDVFLTSIFVRQGEMDALVSKDPAERKKILDEILNIDRLEAGYLLLKEVIDDLTANVSDYDYLKNELQSKINEIDNNNKQIEELESKLRLIEPEIKALEEEINIKENKKDHLNEELHRLNAQLETIKKYEMELAESQSRKASIEMEVVKLPSIEEELKRLENNAAVVKRNEIIEYINLKKDLGSLSEIIEGLKSDLSKYDEAHRKLEDLQSFRSEFLEKKKRKEDLDKLRSSLKEDEDNYQSAVRNIENIKKWIENEEKEIERMSAFISEILKIQEITPEIINSRRAEINSSLMQIEGKIASLNASIDAMRSHKMEVEENAAMLSGRGVCPVCGTHLGTEKSEDLVKHYGEEASRLEEDINKTENEIKKLDEERKHQKKLLDRINGKDVERLIASYNLLSSKRAELKKFMDDEARLKEAHLKAEAAISQYNSIDLGDLEAKNEEWLKANAVISSIDIENIRSRFEEKNKQLNDIIKRMNEIEVNIPDVESYNENSLKRIDEELNSLRNKKNELYAKKAAMDEIQKTIEHFKEEISKKKGIEDSQAEVNAQLLQINDDLKQLSSRLDKINVDQYEWKSLHKVLLQDNEKLNIAVADIRKRLEKKETIIKAIADLKRVREAFSKDGVPAIIRKSASEFITNQTRQYIQRFELDIDDVDVDQDFNITVFRGGIAEGIDSLSGGERMAVAFALRVAIAQFLNKDVSLLVMDEPTAFLDEDRRSDLANIIEYSLKDSSGIPQVIMISHHRELLSASDLALEVKKRNGSSIVDVIR.

ATP contacts are provided by residues 32–38 and Gln-137; that span reads NGAGKSS. The stretch at 183 to 253 forms a coiled coil; the sequence is SDYDYLKNEL…LNAQLETIKK (71 aa). Residues 411–507 enclose the Zinc-hook domain; it reads RAEINSSLMQ…ERKHQKKLLD (97 aa). The Zn(2+) site is built by Cys-455 and Cys-458. Coiled-coil stretches lie at residues 464–510 and 618–647; these read TEKS…DRIN and ENSLKRIDEELNSLRNKKNELYAKKAAMDE.

It belongs to the SMC family. RAD50 subfamily. In terms of assembly, homodimer. Forms a heterotetramer composed of two Mre11 subunits and two Rad50 subunits. The cofactor is Zn(2+).

Its function is as follows. Part of the Rad50/Mre11 complex, which is involved in the early steps of DNA double-strand break (DSB) repair. The complex may facilitate opening of the processed DNA ends to aid in the recruitment of HerA and NurA. Rad50 controls the balance between DNA end bridging and DNA resection via ATP-dependent structural rearrangements of the Rad50/Mre11 complex. This Thermoplasma volcanium (strain ATCC 51530 / DSM 4299 / JCM 9571 / NBRC 15438 / GSS1) protein is DNA double-strand break repair Rad50 ATPase.